The following is a 316-amino-acid chain: Small kinetochore-associated protein (316 aa).

Ser-128 bears the Phosphoserine mark. The tract at residues 159–316 (VRKGYKPLSK…LKEMEQLLEM (158 aa)) is interaction with SPAG5. Coiled coils occupy residues 166 to 216 (LSKQ…FRDN) and 248 to 316 (SMLL…LLEM).

In terms of assembly, part of an astrin (SPAG5)-kinastrin (SKAP) complex containing KNSTRN, SPAG5, PLK1, DYNLL1 and SGO2. Interacts with SPAG5. Directly binds to microtubules, although at relatively low affinity. Interacts with CENPE; this interaction greatly favors microtubule-binding. Interacts with DSN1/MIS13; leading to localization to kinetochores. Interacts with MAPRE1/EB1; leading to localization to the microtubule plus ends. Interacts with PRPF19. Interacts with DYNLL1. Interacts with MAP4. As to expression, widely expressed, including in skin.

The protein resides in the nucleus. Its subcellular location is the chromosome. It localises to the centromere. The protein localises to the kinetochore. It is found in the cytoplasm. The protein resides in the cytoskeleton. Its subcellular location is the spindle pole. It localises to the microtubule organizing center. In terms of biological role, essential component of the mitotic spindle required for faithful chromosome segregation and progression into anaphase. Promotes the metaphase-to-anaphase transition and is required for chromosome alignment, normal timing of sister chromatid segregation, and maintenance of spindle pole architecture. The astrin (SPAG5)-kinastrin (SKAP) complex promotes stable microtubule-kinetochore attachments. Required for kinetochore oscillations and dynamics of microtubule plus-ends during live cell mitosis, possibly by forming a link between spindle microtubule plus-ends and mitotic chromosomes to achieve faithful cell division. May be involved in UV-induced apoptosis via its interaction with PRPF19; however, these results need additional evidences. In Homo sapiens (Human), this protein is Small kinetochore-associated protein.